The sequence spans 103 residues: Large ribosomal subunit protein bL21 (103 aa).

Belongs to the bacterial ribosomal protein bL21 family. As to quaternary structure, part of the 50S ribosomal subunit. Contacts protein L20.

This protein binds to 23S rRNA in the presence of protein L20. This Amoebophilus asiaticus (strain 5a2) protein is Large ribosomal subunit protein bL21.